A 989-amino-acid chain; its full sequence is MALSTVESFVAQQLELLELERDAEVEERRSWQEHSSLKELQSRGVCLLKLQVSSQCTGLYGQRLVTFEPRKLGPVVVLPSNSFTSGDIVGLYDANESSQLATGVLTRITQKSVTVAFDESHDFQLNLDRENTYRLLKLANDVTYKRLKKALMTLKKYHSGPASSLIDVLLGGSSPSPTTEIPPFTFYNTALDPSQKEAVSFALAQKEVAIIHGPPGTGKTTTVVEIILQAVKQGLKILCCAPSNVAVDNLVERLALCKKRILRLGHPARLLESAQQHSLDAVLARSDNAQIVADIRKDIDQVFGKNKKTQDKREKSNFRNEIKLLRKELKEREEAAIVQSLTAADVVLATNTGASSDGPLKLLPENHFDVVVVDECAQALEASCWIPLLKAPKCILAGDHRQLPPTTISHKAALAGLSRSLMERLVEKHGAGAVRMLTVQYRMHQAITRWASEAMYHGQLTAHPSVAGHLLKDLPGVADTEETSVPLLLIDTAGCGLLELDEEDSQSKGNPGEVRLVTLHIQALVDAGVHAGDIAVIAPYNLQVDLLRQSLSNKHPELEIKSVDGFQGREKEAVILTFVRSNRKGEVGFLAEDRRINVAVTRARRHVAVICDSRTVNNHAFLKTLVDYFTEHGEVRTAFEYLDDIVPENYTHEGSQGHSHAPKPRGPVTSIRKPTNEQENGQEARAAAGQGRRKPNERPPGSQVHSQPSSGARGCDRTGAIDRTEHFRAMIEGFVASKESQLEFPASLSSHDRLLVHQIAEEHGLRHDSTGEGKARHITVSRKSPAGSGGVAPQLPSPPSPAQAEPEPLSQQPLGQPHCSTQLDLKALHLQRLQRQQGSQAQPAKAQPGVGLHPQKTQQKKKKKETKGPALPCEEDFDALVSAVIKADNTCSFAKCTASTTTLGQFCMHCSRRYCLSHHLPEIHGCGEKARAHARQMISREGVLYAGSGTRDRALDPAKRAQLQRRLDKKLGELSSQRTSKRKEKERGT.

An N-acetylalanine modification is found at Ala-2. Residues 213 to 220 (GPPGTGKT), Gln-402, Tyr-441, and Glu-570 contribute to the ATP site. Positions 637–783 (TAFEYLDDIV…KARHITVSRK (147 aa)) are SS DNA-binding. 3 disordered regions span residues 650–717 (YTHE…GCDR), 765–818 (LRHD…GQPH), and 833–869 (LQRQ…TKGP). The span at 677 to 690 (EQENGQEARAAAGQ) shows a compositional bias: low complexity. The region spanning 721 to 784 (IDRTEHFRAM…ARHITVSRKS (64 aa)) is the R3H domain. Basic and acidic residues predominate over residues 765–775 (LRHDSTGEGKA). Ser-797 and Ser-800 each carry phosphoserine. The segment covering 833-842 (LQRQQGSQAQ) has biased composition (low complexity). The short motif at 860–864 (KKKKK) is the Nuclear localization signal element. An AN1-type zinc finger spans residues 885 to 934 (IKADNTCSFAKCTASTTTLGQFCMHCSRRYCLSHHLPEIHGCGEKARAHA). Residues Cys-891, Cys-896, Cys-907, Cys-910, Cys-915, His-918, His-924, and Cys-926 each coordinate Zn(2+). Basic and acidic residues predominate over residues 954–972 (ALDPAKRAQLQRRLDKKLG). Residues 954 to 989 (ALDPAKRAQLQRRLDKKLGELSSQRTSKRKEKERGT) form a disordered region.

The protein belongs to the DNA2/NAM7 helicase family. Homooligomer. Interacts with RUVBL1. Interacts with RUVBL2. Interacts with GTF3C1. Interacts with ABT1. Interacts with ribosomes. In terms of tissue distribution, high expression in brain and testis, moderate in heart, spleen, and kidney, and low in other tissues.

It is found in the nucleus. Its subcellular location is the cytoplasm. The protein resides in the cell projection. It localises to the axon. The enzyme catalyses ATP + H2O = ADP + phosphate + H(+). Functionally, 5' to 3' helicase that unwinds RNA and DNA duplexes in an ATP-dependent reaction. Specific to 5'-phosphorylated single-stranded guanine-rich sequences. May play a role in RNA metabolism, ribosome biogenesis or initiation of translation. May play a role in regulation of transcription. Interacts with tRNA-Tyr. The chain is DNA-binding protein SMUBP-2 (IGHMBP2) from Mesocricetus auratus (Golden hamster).